A 123-amino-acid polypeptide reads, in one-letter code: Large ribosomal subunit protein uL14c (123 aa).

Belongs to the universal ribosomal protein uL14 family. In terms of assembly, part of the 50S ribosomal subunit.

Its subcellular location is the plastid. The protein resides in the chloroplast. Its function is as follows. Binds to 23S rRNA. The sequence is that of Large ribosomal subunit protein uL14c from Triticum aestivum (Wheat).